Consider the following 417-residue polypeptide: Glutamyl-tRNA reductase (417 aa).

Substrate contacts are provided by residues threonine 49 to arginine 52, serine 105, glutamate 110 to glutamine 112, and glutamine 116. The active-site Nucleophile is the cysteine 50. Position 185–190 (glycine 185–isoleucine 190) interacts with NADP(+).

It belongs to the glutamyl-tRNA reductase family. Homodimer.

The enzyme catalyses (S)-4-amino-5-oxopentanoate + tRNA(Glu) + NADP(+) = L-glutamyl-tRNA(Glu) + NADPH + H(+). Its pathway is porphyrin-containing compound metabolism; protoporphyrin-IX biosynthesis; 5-aminolevulinate from L-glutamyl-tRNA(Glu): step 1/2. In terms of biological role, catalyzes the NADPH-dependent reduction of glutamyl-tRNA(Glu) to glutamate 1-semialdehyde (GSA). The protein is Glutamyl-tRNA reductase of Azoarcus sp. (strain BH72).